Reading from the N-terminus, the 524-residue chain is PiggyBac transposable element-derived protein 5 (524 aa).

The interval 30 to 117 is disordered; that stretch reads DDVFGESGPD…DTGGPTRKMP (88 aa). Residues 47-59 show a composition bias toward low complexity; it reads STSAASRSSSAAS. Positions 67–79 are enriched in pro residues; it reads PGPPGAAPPPPRA. A compositionally biased stretch (basic and acidic residues) spans 98-108; the sequence is LRDRPPPRFED. Phosphoserine is present on S521.

The protein localises to the nucleus. Its function is as follows. Transposase that mediates sequence-specific genomic rearrangements. Can induce genomic rearrangements that inactivate the HPRT1 gene. The sequence is that of PiggyBac transposable element-derived protein 5 (PGBD5) from Homo sapiens (Human).